We begin with the raw amino-acid sequence, 284 residues long: Nucleotide-binding protein NMA0948 (284 aa).

ATP is bound at residue 8–15; sequence GLSGSGKS. Residue 58–61 participates in GTP binding; the sequence is DVRS.

The protein belongs to the RapZ-like family.

Displays ATPase and GTPase activities. This Neisseria meningitidis serogroup A / serotype 4A (strain DSM 15465 / Z2491) protein is Nucleotide-binding protein NMA0948.